The sequence spans 440 residues: Chromosomal replication initiator protein DnaA (440 aa).

The domain I, interacts with DnaA modulators stretch occupies residues 1–69 (MKERILQEIK…VKVVLGNDAT (69 aa)). Residues 69–96 (TFEITYEAFEPHSSYSEPLVKKRAVLLT) form a domain II region. Residues 97-313 (PLNPDYTFEN…GAIIKLLVYK (217 aa)) are domain III, AAA+ region. ATP-binding residues include Gly140, Gly142, Lys143, and Thr144. A domain IV, binds dsDNA region spans residues 314-440 (ETTGKEVDLK…GEISRRALSG (127 aa)).

The protein belongs to the DnaA family. As to quaternary structure, oligomerizes as a right-handed, spiral filament on DNA at oriC.

The protein resides in the cytoplasm. Its function is as follows. Plays an essential role in the initiation and regulation of chromosomal replication. ATP-DnaA binds to the origin of replication (oriC) to initiate formation of the DNA replication initiation complex once per cell cycle. Binds the DnaA box (a 9 base pair repeat at the origin) and separates the double-stranded (ds)DNA. Forms a right-handed helical filament on oriC DNA; dsDNA binds to the exterior of the filament while single-stranded (ss)DNA is stabiized in the filament's interior. The ATP-DnaA-oriC complex binds and stabilizes one strand of the AT-rich DNA unwinding element (DUE), permitting loading of DNA polymerase. After initiation quickly degrades to an ADP-DnaA complex that is not apt for DNA replication. Binds acidic phospholipids. The protein is Chromosomal replication initiator protein DnaA of Thermotoga sp. (strain RQ2).